Here is a 63-residue protein sequence, read N- to C-terminus: Cytochrome b-c1 complex subunit 9 (63 aa).

Topologically, residues 2-21 are mitochondrial matrix; that stretch reads AAATLTSKLYSLLFRRTSTF. Residues 22–47 form a helical membrane-spanning segment; the sequence is ALTIIVGVMFFERAFDQGADAIYDHI. At 48 to 63 the chain is on the mitochondrial intermembrane side; it reads NEGKLWKHIKHKYENK.

The protein belongs to the UQCR10/QCR9 family. As to quaternary structure, component of the ubiquinol-cytochrome c oxidoreductase (cytochrome b-c1 complex, complex III, CIII), a multisubunit enzyme composed of 11 subunits. The complex is composed of 3 respiratory subunits cytochrome b, cytochrome c1 and Rieske protein UQCRFS1, 2 core protein subunits UQCRC1/QCR1 and UQCRC2/QCR2, and 6 low-molecular weight protein subunits UQCRH/QCR6, UQCRB/QCR7, UQCRQ/QCR8, UQCR10/QCR9, UQCR11/QCR10 and subunit 9, the cleavage product of Rieske protein UQCRFS1. The complex exists as an obligatory dimer and forms supercomplexes (SCs) in the inner mitochondrial membrane with NADH-ubiquinone oxidoreductase (complex I, CI) and cytochrome c oxidase (complex IV, CIV), resulting in different assemblies (supercomplex SCI(1)III(2)IV(1) and megacomplex MCI(2)III(2)IV(2)). Interacts with STMP1.

It is found in the mitochondrion inner membrane. Its function is as follows. Component of the ubiquinol-cytochrome c oxidoreductase, a multisubunit transmembrane complex that is part of the mitochondrial electron transport chain which drives oxidative phosphorylation. The respiratory chain contains 3 multisubunit complexes succinate dehydrogenase (complex II, CII), ubiquinol-cytochrome c oxidoreductase (cytochrome b-c1 complex, complex III, CIII) and cytochrome c oxidase (complex IV, CIV), that cooperate to transfer electrons derived from NADH and succinate to molecular oxygen, creating an electrochemical gradient over the inner membrane that drives transmembrane transport and the ATP synthase. The cytochrome b-c1 complex catalyzes electron transfer from ubiquinol to cytochrome c, linking this redox reaction to translocation of protons across the mitochondrial inner membrane, with protons being carried across the membrane as hydrogens on the quinol. In the process called Q cycle, 2 protons are consumed from the matrix, 4 protons are released into the intermembrane space and 2 electrons are passed to cytochrome c. The chain is Cytochrome b-c1 complex subunit 9 (UQCR10) from Homo sapiens (Human).